The sequence spans 476 residues: Cysteine--tRNA ligase (476 aa).

Zn(2+) is bound at residue cysteine 36. A 'HIGH' region motif is present at residues 38 to 48 (PTVYDYAHIGN). Cysteine 221, histidine 246, and glutamate 250 together coordinate Zn(2+). A 'KMSKS' region motif is present at residues 278–282 (KMSKS). Lysine 281 contributes to the ATP binding site.

This sequence belongs to the class-I aminoacyl-tRNA synthetase family. In terms of assembly, monomer. Zn(2+) serves as cofactor.

It is found in the cytoplasm. It carries out the reaction tRNA(Cys) + L-cysteine + ATP = L-cysteinyl-tRNA(Cys) + AMP + diphosphate. In Chlamydia felis (strain Fe/C-56) (Chlamydophila felis), this protein is Cysteine--tRNA ligase.